The sequence spans 284 residues: Citrate lyase subunit beta-like protein (284 aa).

R74 and E129 together coordinate substrate. The Mg(2+) site is built by E129 and D155.

Belongs to the HpcH/HpaI aldolase family. Citrate lyase beta subunit-like subfamily. In terms of assembly, homotrimer. The cofactor is Mg(2+).

Its function is as follows. May play a role in fatty acid biosynthesis. The polypeptide is Citrate lyase subunit beta-like protein (Deinococcus radiodurans (strain ATCC 13939 / DSM 20539 / JCM 16871 / CCUG 27074 / LMG 4051 / NBRC 15346 / NCIMB 9279 / VKM B-1422 / R1)).